A 234-amino-acid chain; its full sequence is Thymidine kinase, cytosolic (234 aa).

Phosphoserine is present on serine 13. ATP contacts are provided by residues 26–33 (GPMFSGKS), 58–60 (DTR), and 97–100 (DEGQ). The Proton acceptor role is filled by glutamate 98. Substrate is bound at residue phenylalanine 128. Positions 153 and 156 each coordinate Zn(2+). Substrate contacts are provided by residues 172-176 (VEVIG) and tyrosine 181. Positions 185 and 188 each coordinate Zn(2+). Positions 203–205 (KEN) match the KEN box motif.

The protein belongs to the thymidine kinase family. In terms of assembly, homotetramer. Tetramerization from dimerization is induced by ATP and increases catalytic efficiency due to a high affinity for thymidine. Tetramerization is inhibited by phosphorylation at Ser-13. Interacts (via the KEN box) with FZR1. In terms of processing, phosphorylated on Ser-13 in mitosis. Phosphorylation of Ser-13 by CDK1 during mitosis reduces homotetramerization and catalytic efficiency when DNA replication is complete and intracellular TK1 is still present at a high level. Polyubiquitinated. Postmitosis, ubiquitination leads to proteasomal degradation. The KEN box sequence located at the C-terminal region targets for degradation by the anaphase promoting complex (APC/C) activated and rate-limited by FZR1.

It is found in the cytoplasm. The catalysed reaction is thymidine + ATP = dTMP + ADP + H(+). Functionally, cell-cycle-regulated enzyme of importance in nucleotide metabolism. Catalyzes the first enzymatic step in the salvage pathway converting thymidine into thymidine monophosphate. Transcriptional regulation limits expression to the S phase of the cell cycle and transient expression coincides with the oscillation in the intracellular dTTP concentration. In Cricetulus griseus (Chinese hamster), this protein is Thymidine kinase, cytosolic (TK1).